Consider the following 214-residue polypeptide: Adenylate kinase (214 aa).

Residue 10 to 15 (GVGKGT) coordinates ATP. The interval 30–59 (STGDILRAAVKELTPMGAKAKGYMDSGALV) is NMP. AMP contacts are provided by residues Thr-31, Arg-36, 57-59 (ALV), 85-88 (GFPR), and Gln-92. An LID region spans residues 126 to 163 (GRRACANCGAGYHVDFAPSKVAGVCDACSGQLVQREDD). Position 127 (Arg-127) interacts with ATP. Positions 130, 133, 150, and 153 each coordinate Zn(2+). Residues Arg-160 and Arg-171 each coordinate AMP. Gly-199 is a binding site for ATP.

The protein belongs to the adenylate kinase family. In terms of assembly, monomer.

The protein localises to the cytoplasm. It carries out the reaction AMP + ATP = 2 ADP. It participates in purine metabolism; AMP biosynthesis via salvage pathway; AMP from ADP: step 1/1. Its function is as follows. Catalyzes the reversible transfer of the terminal phosphate group between ATP and AMP. Plays an important role in cellular energy homeostasis and in adenine nucleotide metabolism. This is Adenylate kinase from Geobacter sp. (strain M21).